The following is a 494-amino-acid chain: Guanosine-5'-triphosphate,3'-diphosphate pyrophosphatase (494 aa).

The protein belongs to the GppA/Ppx family. GppA subfamily.

The enzyme catalyses guanosine 3'-diphosphate 5'-triphosphate + H2O = guanosine 3',5'-bis(diphosphate) + phosphate + H(+). It functions in the pathway purine metabolism; ppGpp biosynthesis; ppGpp from GTP: step 2/2. In terms of biological role, catalyzes the conversion of pppGpp to ppGpp. Guanosine pentaphosphate (pppGpp) is a cytoplasmic signaling molecule which together with ppGpp controls the 'stringent response', an adaptive process that allows bacteria to respond to amino acid starvation, resulting in the coordinated regulation of numerous cellular activities. The chain is Guanosine-5'-triphosphate,3'-diphosphate pyrophosphatase from Escherichia coli O127:H6 (strain E2348/69 / EPEC).